Consider the following 629-residue polypeptide: MFYPDPFDVIIIGGGHAGTEAAMAAARMGQQTLLLTHNIDTLGQMSCNPAIGGIGKGHLVKEVDALGGLMAKAIDQAGIQFRILNASKGPAVRATRAQADRVRYRQAVRTALENQPNLMIFQQAVEDLIVENDRVVGAVTQMGLKFRAKAVVLTVGTFLDGKIHIGLDNYSGGRAGDPPSIPLSRRLRELPLRVGRLKTGTPPRIDARTIDFSVLAQQHGDNPMPVFSFMGNASLHPQQVPCYITHTNEKTHDVIRSNLDRSPMYAGVIEGVGPRYCPSIEDKVMRFADRNQHQIFLEPEGLTSNEIYPNGISTSLPFDVQMQIVRSMQGMENAKIVRPGYAIEYDFFDPRDLKPTLESKFIQGLFFAGQINGTTGYEEAAAQGLLAGLNAARLSADKEGWAPARSQAYLGVLVDDLCTLGTKEPYRMFTSRAEYRLMLREDNADLRLTEIGRELGLVDDERWARFNEKLENIERERQRLKSTWVTPSAEAAAEVNAHLTAPLSREASGEDLLRRPEMTYEKLTTLTPFAPALTDEQAAEQVEIQVKYEGYIARQQDEIEKQLRNENTLLPATLDYRQISGLSNEVIAKLNDHKPASIGQASRISGVTPAAISILLVWLKKQGMLRRSA.

FAD is bound by residues 13-18 (GGGHAG), V125, and S180. Residue 273–287 (GPRYCPSIEDKVMRF) participates in NAD(+) binding. Q370 provides a ligand contact to FAD.

The protein belongs to the MnmG family. In terms of assembly, homodimer. Heterotetramer of two MnmE and two MnmG subunits. FAD is required as a cofactor.

The protein resides in the cytoplasm. Functionally, NAD-binding protein involved in the addition of a carboxymethylaminomethyl (cmnm) group at the wobble position (U34) of certain tRNAs, forming tRNA-cmnm(5)s(2)U34. The polypeptide is tRNA uridine 5-carboxymethylaminomethyl modification enzyme MnmG (Shigella flexneri serotype 5b (strain 8401)).